The sequence spans 582 residues: MGLRHLVLCPGSRSGPLALAAGGMARTNRLRLSTAIDERSAAFLALGFSTATGTAAAVVTTSGTAVANLLPAAVEADRSCQPLLLLTADRPYRLKDCGANQTVNQETFLSPACRWIGQGPREGLHLFSKETLESFAEKAWQRAHHPAGAVHLNLPFEEPLHLSEEEQRMIWKGWSPKIPRSSPIKPINLAMAAEGTNGVTDQAPFALDPLRPGVVIAGAWRGLSKDLFAFQQSLREWQALSGWPVLADPLSALPSDQPGLIRSWELLLATGLLGSQEQLQVLRLGPMSASRSLEAWLKSFGDGQLLITEGDSRCLDPLGLSVQWNHGLTSWWQHHHHRWIDADAASQQATKALLRKWQISDRFAQEWLDQQLPLQGAITEPALARWLSRLLPTELPIMLAASSPVRDWLAYADKSLFSRRCFSFRGASGIDGTLSLSMGLAMALGPTLLVSGDLALLHDSNGWLLAHPQRPPLVVVLIDNGGGGIFEQLLVKTAPSEAFEQLFAMPQEVDPLALAGAHNIPHRQVACLEDLPAALEWGLFQAGPVLIRVCTHRRQDSSMRQQLREGLMMHLQSISQNGHIDL.

The protein belongs to the TPP enzyme family. MenD subfamily. In terms of assembly, homodimer. The cofactor is Mg(2+). It depends on Mn(2+) as a cofactor. Thiamine diphosphate is required as a cofactor.

The enzyme catalyses isochorismate + 2-oxoglutarate + H(+) = 5-enolpyruvoyl-6-hydroxy-2-succinyl-cyclohex-3-ene-1-carboxylate + CO2. It participates in quinol/quinone metabolism; 1,4-dihydroxy-2-naphthoate biosynthesis; 1,4-dihydroxy-2-naphthoate from chorismate: step 2/7. The protein operates within cofactor biosynthesis; phylloquinone biosynthesis. In terms of biological role, catalyzes the thiamine diphosphate-dependent decarboxylation of 2-oxoglutarate and the subsequent addition of the resulting succinic semialdehyde-thiamine pyrophosphate anion to isochorismate to yield 2-succinyl-5-enolpyruvyl-6-hydroxy-3-cyclohexene-1-carboxylate (SEPHCHC). The protein is 2-succinyl-5-enolpyruvyl-6-hydroxy-3-cyclohexene-1-carboxylate synthase of Prochlorococcus marinus (strain MIT 9313).